Reading from the N-terminus, the 556-residue chain is 2-succinyl-5-enolpyruvyl-6-hydroxy-3-cyclohexene-1-carboxylate synthase (556 aa).

Belongs to the TPP enzyme family. MenD subfamily. In terms of assembly, homodimer. Requires Mg(2+) as cofactor. The cofactor is Mn(2+). Thiamine diphosphate serves as cofactor.

It catalyses the reaction isochorismate + 2-oxoglutarate + H(+) = 5-enolpyruvoyl-6-hydroxy-2-succinyl-cyclohex-3-ene-1-carboxylate + CO2. The protein operates within quinol/quinone metabolism; 1,4-dihydroxy-2-naphthoate biosynthesis; 1,4-dihydroxy-2-naphthoate from chorismate: step 2/7. Its pathway is quinol/quinone metabolism; menaquinone biosynthesis. In terms of biological role, catalyzes the thiamine diphosphate-dependent decarboxylation of 2-oxoglutarate and the subsequent addition of the resulting succinic semialdehyde-thiamine pyrophosphate anion to isochorismate to yield 2-succinyl-5-enolpyruvyl-6-hydroxy-3-cyclohexene-1-carboxylate (SEPHCHC). This chain is 2-succinyl-5-enolpyruvyl-6-hydroxy-3-cyclohexene-1-carboxylate synthase, found in Salmonella paratyphi C (strain RKS4594).